The following is a 164-amino-acid chain: Phosphopantetheine adenylyltransferase (164 aa).

Ser-10 is a binding site for substrate. Residues 10-11 (SF) and His-18 contribute to the ATP site. Residues Lys-42, Leu-74, and Arg-88 each coordinate substrate. Residues 89 to 91 (GLR), Glu-99, and 124 to 130 (YSFLSSS) each bind ATP.

Belongs to the bacterial CoaD family. As to quaternary structure, homohexamer. Mg(2+) serves as cofactor.

It localises to the cytoplasm. It carries out the reaction (R)-4'-phosphopantetheine + ATP + H(+) = 3'-dephospho-CoA + diphosphate. It functions in the pathway cofactor biosynthesis; coenzyme A biosynthesis; CoA from (R)-pantothenate: step 4/5. Reversibly transfers an adenylyl group from ATP to 4'-phosphopantetheine, yielding dephospho-CoA (dPCoA) and pyrophosphate. The sequence is that of Phosphopantetheine adenylyltransferase from Exiguobacterium sp. (strain ATCC BAA-1283 / AT1b).